A 125-amino-acid polypeptide reads, in one-letter code: Glycine cleavage system H protein (125 aa).

Residues Ser-21 to Lys-103 form the Lipoyl-binding domain. Lys-62 carries the N6-lipoyllysine modification.

It belongs to the GcvH family. In terms of assembly, the glycine cleavage system is composed of four proteins: P, T, L and H. It depends on (R)-lipoate as a cofactor.

In terms of biological role, the glycine cleavage system catalyzes the degradation of glycine. The H protein shuttles the methylamine group of glycine from the P protein to the T protein. The protein is Glycine cleavage system H protein of Psychromonas ingrahamii (strain DSM 17664 / CCUG 51855 / 37).